A 570-amino-acid chain; its full sequence is Formate--tetrahydrofolate ligase (570 aa).

65 to 72 (TPHGEGKT) contacts ATP.

The protein belongs to the formate--tetrahydrofolate ligase family.

The enzyme catalyses (6S)-5,6,7,8-tetrahydrofolate + formate + ATP = (6R)-10-formyltetrahydrofolate + ADP + phosphate. Its pathway is one-carbon metabolism; tetrahydrofolate interconversion. The chain is Formate--tetrahydrofolate ligase from Shewanella putrefaciens (strain CN-32 / ATCC BAA-453).